A 312-amino-acid polypeptide reads, in one-letter code: Very long chain fatty acid elongase 4 (312 aa).

N-linked (GlcNAc...) asparagine glycosylation is present at asparagine 20. 7 helical membrane-spanning segments follow: residues 42 to 62 (LMQS…FVWL), 78 to 98 (VLII…RELF), 127 to 147 (ALWW…FFIL), 165 to 185 (MFTL…FFGA), 188 to 208 (NSFI…GPWI), 217 to 237 (YLTM…ALSL), and 246 to 266 (WMHW…LNFY). Polar residues predominate over residues 273–292 (PKQSKTGKTATNGISSNGVN). A disordered region spans residues 273–312 (PKQSKTGKTATNGISSNGVNKSEKALENGKPQKNGKPKGE). Asparagine 292 carries N-linked (GlcNAc...) asparagine glycosylation. Residues 308 to 312 (KPKGE) carry the Di-lysine motif motif.

This sequence belongs to the ELO family. ELOVL4 subfamily. Oligomer. Post-translationally, N-glycosylated. As to expression, expressed in the retina, exclusively in photoreceptor cells and in the brain, skin, testis and lens.

It is found in the endoplasmic reticulum membrane. It carries out the reaction a very-long-chain acyl-CoA + malonyl-CoA + H(+) = a very-long-chain 3-oxoacyl-CoA + CO2 + CoA. The catalysed reaction is hexacosanoyl-CoA + malonyl-CoA + H(+) = 3-oxooctacosanyol-CoA + CO2 + CoA. The enzyme catalyses octacosanoyl-CoA + malonyl-CoA + H(+) = 3-oxo-triacontanoyl-CoA + CO2 + CoA. It catalyses the reaction triacontanoyl-CoA + malonyl-CoA + H(+) = 3-oxo-dotriacontanoyl-CoA + CO2 + CoA. It carries out the reaction (19Z,22Z,25Z,28Z,31Z)-tetratriacontapentaenoyl-CoA + malonyl-CoA + H(+) = 3-oxo-(21Z,24Z,27Z,30Z,33Z)-hexatriacontapentaenoyl-CoA + CO2 + CoA. The catalysed reaction is (4Z,7Z,10Z,13Z,16Z,19Z)-docosahexaenoyl-CoA + malonyl-CoA + H(+) = 3-oxo-(6Z,9Z,12Z,15Z,18Z,21Z)-tetracosahexaenoyl-CoA + CO2 + CoA. The enzyme catalyses (7Z,10Z,13Z,16Z)-docosatetraenoyl-CoA + malonyl-CoA + H(+) = (9Z,12Z,15Z,18Z)-3-oxotetracosatetraenoyl-CoA + CO2 + CoA. It catalyses the reaction (11Z,14Z,17Z,20Z,23Z)-hexacosapentaenoyl-CoA + malonyl-CoA + H(+) = 3-oxo-(13Z,16Z,19Z,22Z,25Z)-octacosapentaenoyl-CoA + CO2 + CoA. It carries out the reaction (13Z,16Z,19Z,22Z,25Z)-octacosapentaenoyl-CoA + malonyl-CoA + H(+) = 3-oxo-(15Z,18Z,21Z,24Z,27Z)-triacontapentaenoyl-CoA + CO2 + CoA. The catalysed reaction is (15Z,18Z,21Z,24Z,27Z)-triacontapentaenoyl-CoA + malonyl-CoA + H(+) = 3-oxo-(17Z,20Z,23Z,26Z,29Z)-dotriacontapentaenoyl-CoA + CO2 + CoA. The enzyme catalyses (17Z,20Z,23Z,26Z,29Z)-dotriacontapentaenoyl-CoA + malonyl-CoA + H(+) = 3-oxo-(19Z,22Z,25Z,28Z,31Z)-tetratriacontapentaenoyl-CoA + CO2 + CoA. It catalyses the reaction (21Z,24Z,27Z,30Z,33Z)-hexatriacontapentaenoyl-CoA + malonyl-CoA + H(+) = 3-oxo-(23Z,26Z,29Z,32Z,35Z)-octatriacontapentaenoyl-CoA + CO2 + CoA. It carries out the reaction (11Z,14Z,17Z,20Z)-hexacosatetraenoyl-CoA + malonyl-CoA + H(+) = (13Z,16Z,19Z,22Z)-3-oxooctacosatetraenoyl-CoA + CO2 + CoA. The catalysed reaction is (13Z,16Z,19Z,22Z)-octacosatetraenoyl-CoA + malonyl-CoA + H(+) = 3-oxo-(15Z,18Z,21Z,24Z)-triacontatetraenoyl-CoA + CO2 + CoA. The enzyme catalyses (15Z,18Z,21Z,24Z)-triacontatetraenoyl-CoA + malonyl-CoA + H(+) = 3-oxo-(17Z,20Z,23Z,26Z)-dotriacontatetraenoyl-CoA + CO2 + CoA. It catalyses the reaction (17Z,20Z,23Z,26Z)-dotriacontatetraenoyl-CoA + malonyl-CoA + H(+) = 3-oxo-(19Z,22Z,25Z,28Z)-tetratriacontatetraenoyl-CoA + CO2 + CoA. It carries out the reaction (19Z,22Z,25Z,28Z)-tetratriacontatetraenoyl-CoA + malonyl-CoA + H(+) = 3-oxo-(21Z,24Z,27Z,30Z)-hexatriacontatetraenoyl-CoA + CO2 + CoA. The catalysed reaction is (21Z,24Z,27Z,30Z)-hexatriacontatetraenoyl-CoA + malonyl-CoA + H(+) = 3-oxo-(23Z,26Z,29Z,32Z)-octatriacontatetraenoyl-CoA + CO2 + CoA. The enzyme catalyses (6Z,9Z,12Z,15Z,18Z,21Z)-tetracosahexaenoyl-CoA + malonyl-CoA + H(+) = 3-oxo-(8Z,11Z,14Z,17Z,20Z,23Z)-hexacosahexaenoyl-CoA + CO2 + CoA. It catalyses the reaction (8Z,11Z,14Z,17Z,20Z,23Z)-hexacosahexaenoyl-CoA + malonyl-CoA + H(+) = 3-oxo-(10Z,13Z,16Z,19Z,22Z,25Z)-octacosahexaenoyl-CoA + CO2 + CoA. It carries out the reaction (10Z,13Z,16Z,19Z,22Z,25Z)-octacosahexaenoyl-CoA + malonyl-CoA + H(+) = 3-oxo-(12Z,15Z,18Z,21Z,24Z,27Z)-triacontahexaenoyl-CoA + CO2 + CoA. The catalysed reaction is (12Z,15Z,18Z,21Z,24Z,27Z)-triacontahexaenoyl-CoA + malonyl-CoA + H(+) = 3-oxo-(14Z,17Z,20Z,23Z,26Z,29Z)-dotriacontahexaenoyl-CoA + CO2 + CoA. The enzyme catalyses (14Z,17Z,20Z,23Z,26Z,29Z)-dotriacontahexaenoyl-CoA + malonyl-CoA + H(+) = 3-oxo-(16Z,19Z,22Z,25Z,28Z,31Z)-tetratriacontahexaenoyl-CoA + CO2 + CoA. It catalyses the reaction (16Z,19Z,22Z,25Z,28Z,31Z)-tetratriacontahexaenoyl-CoA + malonyl-CoA + H(+) = 3-oxo-(18Z,21Z,24Z,27Z,30Z,33Z)-hexatriacontahexaenoyl-CoA + CO2 + CoA. It carries out the reaction (9Z,12Z,15Z,18Z,21Z)-tetracosapentaenoyl-CoA + malonyl-CoA + H(+) = 3-oxo-(11Z,14Z,17Z,20Z,23Z)-hexacosapentaenoyl-CoA + CO2 + CoA. It participates in lipid metabolism; fatty acid biosynthesis. Catalyzes the first and rate-limiting reaction of the four reactions that constitute the long-chain fatty acids elongation cycle. This endoplasmic reticulum-bound enzymatic process allows the addition of 2 carbons to the chain of long- and very long-chain fatty acids (VLCFAs) per cycle. Condensing enzyme that catalyzes the synthesis of very long chain saturated (VLC-SFA) and polyunsaturated (PUFA) fatty acids that are involved in multiple biological processes as precursors of membrane lipids and lipid mediators. May play a critical role in early brain and skin development. This chain is Very long chain fatty acid elongase 4, found in Mus musculus (Mouse).